A 1038-amino-acid chain; its full sequence is MFKQKLKMKPKIKRNCTFSGLAFILMLLFSSFTVNNLNAQSEVTGTIMGEDGIPIPGVNVIQKGTKNGTVTDFDGRYSVTLVPGQLVLVYSYIGYETQEVPIKSRKVIDLTLKAELQSLDEVVVIGYGEQKRADVIGAVGSVDSEELSSVSPVDALQGIQGRVAGVQVTTNGGPGGDSEIIIRGISTFGAGSSPLYVVDGQQVNDITNINPADIESMDILKDGASAAIYGSKSANGVVLITTKQGKPGFPKMTVDYISSVSFLNNLVPVSNTRQWNKFESLRTGSTDASGQVEDSLGIRSQLVVDVQDAIKQLGVKNQVNLAFSGGGEKSKFYWNTGYLDETGIVKGSGYNRITSNLKIDFDLNKFITAGTRMTGTYQMQDGINEGSVFRNLSYRQPNVLLVDFDGSYIRERYARNNPLARAELQVNDNRQFSSTIFNYISVKLAPGLTFKTTLGFNYRNQKLNQFNPQETVNIDNGKINGRERVNTFYDFQNENFFNYNKTFNDKHTVTGLAGFSIQRWWYEYSDLNAIEFNNDYIQTFNNVKEYNLNTTGTDATTHALSSLYARIGYDYKSKYLITASIRRDGSSRFGENRIWGNFPAIQLGWKISEENFMKSLGFINLLKLRASYAITGNERIGDFESIALYNPGFFYNSVNGFAPVQLGNGDLGWEETAQQNYGIDLSLFKRRLNVSVDRYVKTTDDLLYNVPIPQETGFSNIRANIGSVENRGWEVSIAAKPIRNERFTWTTSFNFSYNENEVLELADEDGFETGGYLIEEGESLGNMYGYKNLGVFQYDESNAFTPDGIRLTPNFDANQNFVNYTLNGQAYNGDIERLKFANKVLRGGDIIFQDQNGDFNIDAANDRTIIGNGLSDFAGGFSNRFDYNGFFFSFLFNYNFGNDIYRDYDHIRDKASNAVYAPSPDRIDGAWVNPGDITKYPSLEVSRANNRSGYESNYVSSADFISLRNIQLGYSFNPDTLNKLGFINRLSLNASINNVFMFTNYEGYNPELGNRGNALEPGWDSLRYPNQTEIVIGLNVEF.

The first 39 residues, 1 to 39 (MFKQKLKMKPKIKRNCTFSGLAFILMLLFSSFTVNNLNA), serve as a signal peptide directing secretion. The TonB box signature appears at 120–127 (DEVVVIGY). A TBDR plug domain is found at 131 to 243 (KRADVIGAVG…ANGVVLITTK (113 aa)). The TBDR beta-barrel domain occupies 249 to 1038 (FPKMTVDYIS…EIVIGLNVEF (790 aa)). Residues 1021–1038 (SLRYPNQTEIVIGLNVEF) carry the TonB C-terminal box motif.

It belongs to the TonB-dependent receptor family.

It localises to the cell outer membrane. Functionally, tonB-dependent receptor probably involved in ulvan degradation. Ulvan is the main polysaccharide component of the Ulvales (green seaweed) cell wall. It is composed of disaccharide building blocks comprising 3-sulfated rhamnose (Rha3S) linked to D-glucuronic acid (GlcA), L-iduronic acid (IduA), or D-xylose (Xyl). The TonB-dependent receptor may mediate transport of ulvan oligosaccharides from the surface of the outer membrane to the periplasm for subsequent degradation. The protein is TonB-dependent receptor P39 of Formosa agariphila (strain DSM 15362 / KCTC 12365 / LMG 23005 / KMM 3901 / M-2Alg 35-1).